Here is a 235-residue protein sequence, read N- to C-terminus: Elongation factor Tu (235 aa).

The tr-type G domain occupies 1–125 (KNMITGATQM…DGDKYIPTPS (125 aa)). 47-50 (NKQD) lines the GTP pocket.

This sequence belongs to the TRAFAC class translation factor GTPase superfamily. Classic translation factor GTPase family. EF-Tu/EF-1A subfamily. As to quaternary structure, monomer.

The protein localises to the cytoplasm. The catalysed reaction is GTP + H2O = GDP + phosphate + H(+). In terms of biological role, GTP hydrolase that promotes the GTP-dependent binding of aminoacyl-tRNA to the A-site of ribosomes during protein biosynthesis. In Leptolyngbya boryana (Plectonema boryanum), this protein is Elongation factor Tu (tufA).